We begin with the raw amino-acid sequence, 359 residues long: Dihydroorotate dehydrogenase (quinone) (359 aa).

Residues Ala68–Lys72 and Ala92 each bind FMN. A substrate-binding site is contributed by Lys72. Residue Asn117 to Phe121 coordinates substrate. Asn146 and Asn179 together coordinate FMN. Asn179 serves as a coordination point for substrate. Ser182 serves as the catalytic Nucleophile. A substrate-binding site is contributed by Asn184. Positions 215 and 243 each coordinate FMN. A substrate-binding site is contributed by Asn244–Thr245. Residues Gly263, Gly292, and Tyr313–Thr314 each bind FMN.

It belongs to the dihydroorotate dehydrogenase family. Type 2 subfamily. In terms of assembly, monomer. FMN serves as cofactor.

Its subcellular location is the cell membrane. It catalyses the reaction (S)-dihydroorotate + a quinone = orotate + a quinol. It participates in pyrimidine metabolism; UMP biosynthesis via de novo pathway; orotate from (S)-dihydroorotate (quinone route): step 1/1. Functionally, catalyzes the conversion of dihydroorotate to orotate with quinone as electron acceptor. The protein is Dihydroorotate dehydrogenase (quinone) of Nautilia profundicola (strain ATCC BAA-1463 / DSM 18972 / AmH).